The primary structure comprises 360 residues: uncharacterized protein (360 aa).

The tract at residues 1 to 33 (MSGRRKGCSAATASSSSSSPPSRLPPLPGHARR) is disordered.

The protein belongs to the herpesviridae US22 family.

This is an uncharacterized protein from Human cytomegalovirus (strain AD169) (HHV-5).